The following is a 394-amino-acid chain: MSRNDSGNFLISEEDWSLHRKGFDDQQRHQKKVQEAIKNNLPDLVTEESIIMSNGKDVVKIPIRSLDEYKIRYNYDKNKHVGQGDGDSEVGDVVARDGADKKQGAGKGQGAGDQAGEDYYEAEVSLMDLEEALFQELELPNLQQKERDNIVHTDIEFNDIRKTGLTGNIDKKRTMLSAYKRNAMTGKPSFYPIYPEDLKYKTWNDVTKPESKAVVLAMMDTSGSMGVWEKYMARSFFFWMTRFLRTKYETVDIEFIAHHTEAKVVSEEDFFSKGESGGTICSSVYRKSLELIDEKYDPARYNIYPFHFSDGDNLTSDNARCVKLVNDIMKKSNLFCYGEVNQYNRHSTLMSAYKNVKDDKFKYYILKQKSDVFQALKSFFKNEESGVSKASYEI.

It belongs to the UPF0229 family.

This is UPF0229 protein RBAM_009260 from Bacillus velezensis (strain DSM 23117 / BGSC 10A6 / LMG 26770 / FZB42) (Bacillus amyloliquefaciens subsp. plantarum).